Here is a 217-residue protein sequence, read N- to C-terminus: 3,4-dihydroxy-2-butanone 4-phosphate synthase (217 aa).

D-ribulose 5-phosphate is bound by residues 37–38 (RE), aspartate 42, 150–154 (RQGHT), and glutamate 174. Glutamate 38 lines the Mg(2+) pocket. Histidine 153 contributes to the Mg(2+) binding site.

Belongs to the DHBP synthase family. In terms of assembly, homodimer. It depends on Mg(2+) as a cofactor. The cofactor is Mn(2+).

The enzyme catalyses D-ribulose 5-phosphate = (2S)-2-hydroxy-3-oxobutyl phosphate + formate + H(+). It participates in cofactor biosynthesis; riboflavin biosynthesis; 2-hydroxy-3-oxobutyl phosphate from D-ribulose 5-phosphate: step 1/1. Functionally, catalyzes the conversion of D-ribulose 5-phosphate to formate and 3,4-dihydroxy-2-butanone 4-phosphate. This chain is 3,4-dihydroxy-2-butanone 4-phosphate synthase, found in Desulforamulus reducens (strain ATCC BAA-1160 / DSM 100696 / MI-1) (Desulfotomaculum reducens).